Here is a 945-residue protein sequence, read N- to C-terminus: Leucine--tRNA ligase (945 aa).

Positions 66–77 (PYPSGTGLHVGH) match the 'HIGH' region motif. The 'KMSKS' region motif lies at 716-720 (KMGKS). Lysine 719 contacts ATP.

The protein belongs to the class-I aminoacyl-tRNA synthetase family.

It localises to the cytoplasm. The enzyme catalyses tRNA(Leu) + L-leucine + ATP = L-leucyl-tRNA(Leu) + AMP + diphosphate. This is Leucine--tRNA ligase from Rhodococcus jostii (strain RHA1).